A 400-amino-acid chain; its full sequence is Aspartate aminotransferase (400 aa).

L-aspartate-binding residues include Gly37, Trp126, and Asn176. Residue Lys238 is modified to N6-(pyridoxal phosphate)lysine. Residue Arg367 coordinates L-aspartate.

The protein belongs to the class-I pyridoxal-phosphate-dependent aminotransferase family. In terms of assembly, homodimer. Requires pyridoxal 5'-phosphate as cofactor.

Its subcellular location is the cytoplasm. It carries out the reaction L-aspartate + 2-oxoglutarate = oxaloacetate + L-glutamate. Catalyzes the reversible conversion of aspartate and 2-oxoglutarate to glutamate and oxaloacetate. Has very weak prephenate aminotransferase activity. In Musicola paradisiaca (strain Ech703) (Dickeya paradisiaca), this protein is Aspartate aminotransferase.